Consider the following 289-residue polypeptide: Acetyl-coenzyme A carboxylase carboxyl transferase subunit beta (289 aa).

In terms of domain architecture, CoA carboxyltransferase N-terminal spans 28 to 289; it reads VMTKCPKCKK…QGGGMAVWQS (262 aa). 4 residues coordinate Zn(2+): Cys-32, Cys-35, Cys-51, and Cys-54. The C4-type zinc finger occupies 32-54; that stretch reads CPKCKKIMYTKELLKNLKVCVNC.

The protein belongs to the AccD/PCCB family. As to quaternary structure, acetyl-CoA carboxylase is a heterohexamer composed of biotin carboxyl carrier protein (AccB), biotin carboxylase (AccC) and two subunits each of ACCase subunit alpha (AccA) and ACCase subunit beta (AccD). It depends on Zn(2+) as a cofactor.

It is found in the cytoplasm. The catalysed reaction is N(6)-carboxybiotinyl-L-lysyl-[protein] + acetyl-CoA = N(6)-biotinyl-L-lysyl-[protein] + malonyl-CoA. It participates in lipid metabolism; malonyl-CoA biosynthesis; malonyl-CoA from acetyl-CoA: step 1/1. In terms of biological role, component of the acetyl coenzyme A carboxylase (ACC) complex. Biotin carboxylase (BC) catalyzes the carboxylation of biotin on its carrier protein (BCCP) and then the CO(2) group is transferred by the transcarboxylase to acetyl-CoA to form malonyl-CoA. The chain is Acetyl-coenzyme A carboxylase carboxyl transferase subunit beta from Bacillus mycoides (strain KBAB4) (Bacillus weihenstephanensis).